Reading from the N-terminus, the 609-residue chain is Ovochymase-2 (609 aa).

The signal sequence occupies residues 1-22 (MPISKDKLILILGMVCLEQGHS). The propeptide at 23–51 (ETLSSIRNPDCGQSLVKPQPQNYFSLFSR) is activation peptide. Residues 52-299 (IVGGSQVEKG…VLPWILKHIQ (248 aa)) form the Peptidase S1 domain. A disulfide bond links cysteine 77 and cysteine 93. Catalysis depends on histidine 92, which acts as the Charge relay system. Residue asparagine 104 is glycosylated (N-linked (GlcNAc...) asparagine). Residue glutamate 119 participates in Ca(2+) binding. Catalysis depends on aspartate 142, which acts as the Charge relay system. Intrachain disulfides connect cysteine 176–cysteine 246, cysteine 207–cysteine 225, cysteine 236–cysteine 265, and cysteine 311–cysteine 341. Serine 240 acts as the Charge relay system in catalysis. 2 consecutive CUB domains span residues 311–421 (CSEP…YKAL) and 431–543 (CRSL…ISFI). An N-linked (GlcNAc...) asparagine glycan is attached at asparagine 356. Cysteines 365 and 384 form a disulfide. An N-linked (GlcNAc...) asparagine glycan is attached at asparagine 415. 2 disulfide bridges follow: cysteine 431/cysteine 458 and cysteine 485/cysteine 506. Asparagine 530 and asparagine 549 each carry an N-linked (GlcNAc...) asparagine glycan. The tract at residues 580-609 (HTKPPYEEDIGEMPAIDSGLLKQGERRGKH) is disordered.

This sequence belongs to the peptidase S1 family. Only expressed in uterus tissue. Expressed in the initial segment (IS) of the caput epididymis, the region most proximal to the testis.

It localises to the secreted. Functionally, may be required for sperm ADAM3 processing and consequential sperm fertilizing ability. In vitro, has an endopeptidase activity. In Mus musculus (Mouse), this protein is Ovochymase-2.